Consider the following 410-residue polypeptide: Cathepsin D (410 aa).

The N-terminal stretch at 1 to 18 (MQPPSLLLLVLGLLAAPA) is a signal peptide. Residues 19 to 64 (AALVRIPLHKFTSVRRTMTELGGPVEDLIAKGPISKYAQGAPAVTG) constitute a propeptide, activation peptide. The 327-residue stretch at 79–405 (YYGEIGIGTP…DRDQNRVGLA (327 aa)) folds into the Peptidase A1 domain. 2 disulfide bridges follow: cysteine 91/cysteine 160 and cysteine 110/cysteine 117. Residue aspartate 97 is part of the active site. N-linked (GlcNAc...) asparagine glycosylation is found at asparagine 134 and asparagine 261. Cysteine 284 and cysteine 288 form a disulfide bridge. Aspartate 293 is a catalytic residue. Cysteine 327 and cysteine 364 are disulfide-bonded.

The protein belongs to the peptidase A1 family. In terms of assembly, consists of a light chain and a heavy chain. Interacts with ADAM30; this leads to activation of CTSD. Interacts with GRN; stabilizes CTSD; increases its proteolytic activity. N- and O-glycosylated. In terms of processing, undergoes proteolytic cleavage and activation by ADAM30.

It localises to the lysosome. Its subcellular location is the melanosome. It is found in the secreted. The protein resides in the extracellular space. The enzyme catalyses Specificity similar to, but narrower than, that of pepsin A. Does not cleave the 4-Gln-|-His-5 bond in B chain of insulin.. Its function is as follows. Acid protease active in intracellular protein breakdown. Plays a role in APP processing following cleavage and activation by ADAM30 which leads to APP degradation. The chain is Cathepsin D (CTSD) from Canis lupus familiaris (Dog).